Consider the following 92-residue polypeptide: MSKIYIVAYVYGVVQGVGFRYSTQRQAQQLGVTGYAKNCDDGSVEVVASGNPQAVERLMEWIRQGGPRGARVDRLLTEPYPPTPFETFSIRY.

In terms of domain architecture, Acylphosphatase-like spans 5–92 (YIVAYVYGVV…TPFETFSIRY (88 aa)). Catalysis depends on residues R20 and N38.

Belongs to the acylphosphatase family.

It catalyses the reaction an acyl phosphate + H2O = a carboxylate + phosphate + H(+). In Yersinia pseudotuberculosis serotype O:1b (strain IP 31758), this protein is Acylphosphatase (acyP).